Here is a 519-residue protein sequence, read N- to C-terminus: Putative lipase ATG15 (519 aa).

Residues 1 to 5 (MYIPG) are Cytoplasmic-facing. The chain crosses the membrane as a helical; Signal-anchor for type II membrane protein span at residues 6-26 (PLRLSSYLLPFLSSPSPPAQS). Residues 27 to 519 (SPDTRTISFK…CYKWEFGEWN (493 aa)) are Lumenal-facing. N-linked (GlcNAc...) asparagine glycans are attached at residues Asn-48, Asn-133, Asn-196, Asn-220, Asn-302, and Asn-309. Ser-318 functions as the Charge relay system in the catalytic mechanism. The N-linked (GlcNAc...) asparagine glycan is linked to Asn-361. The segment at 481-502 (RRGPKRQPGGEDPKHGGVPKPV) is disordered.

Belongs to the AB hydrolase superfamily. Lipase family. Binds to both phosphatidylinositol (PI) and phosphatidylinositol 3,5-bisphosphate (PIP2).

It is found in the endosome. The protein resides in the multivesicular body membrane. It localises to the prevacuolar compartment membrane. The catalysed reaction is a triacylglycerol + H2O = a diacylglycerol + a fatty acid + H(+). Functionally, lipase which is essential for lysis of subvacuolar cytoplasm to vacuole targeted bodies and intravacuolar autophagic bodies. Involved in the lysis of intravacuolar multivesicular body (MVB) vesicles. The intravacuolar membrane disintegration by ATG15 is critical to life span extension. The protein is Putative lipase ATG15 (ATG15) of Cryptococcus neoformans var. neoformans serotype D (strain B-3501A) (Filobasidiella neoformans).